The following is a 30-amino-acid chain: Sillucin (30 aa).

4 disulfides stabilise this stretch: Cys-2–Cys-7, Cys-12–Cys-24, Cys-13–Cys-30, and Cys-14–Cys-21.

It localises to the secreted. Its function is as follows. Sillucin is an antimicrobial agent produced by the thermophilic fungus Rhizomucor pusillus in liquid culture; it is effective against Gram-positive bacteria at the level of RNA metabolism. This Rhizomucor pusillus protein is Sillucin.